The chain runs to 352 residues: Plant intracellular Ras-group-related LRR protein 1 (352 aa).

The segment at 1-25 is disordered; it reads MREMGEKRRRGHLNPAGFAGGLHDH. LRR repeat units follow at residues 29–52, 53–75, 77–99, 100–122, 124–146, 147–169, 171–192, 195–217, 218–241, and 243–263; these read KNEEHKLDMSGMSMDALPHLTMSL, GQVTILDLSNNNLESIPESIIAR, LNVVVLDVRSNQLKSLPNSIGCL, SKLKVLNVSGNLLESLPNTIEEC, ALEELHANFNELTKLPDTLGFEL, HSLRKLSVNSNKLAQLPSSTSHM, ALRALDARLNCLRALPDGLENL, LEALNVSQNFQFLRELPYAVGLL, ASLRELDVSYNSIAALPDSMGCLT, and LARFSAVGNPLVSPPMDVVEQ. A GVYW; degenerate motif is present at residues 264–271; that stretch reads GLDAMRAY.

Belongs to the SHOC2 family. Widely expressed but at a lower level in seedlings and stems.

Leucine-rich repeat protein that likely mediates protein interactions, possibly in the context of signal transduction. The chain is Plant intracellular Ras-group-related LRR protein 1 (IRL1) from Oryza sativa subsp. japonica (Rice).